Reading from the N-terminus, the 256-residue chain is MYSSVSKRLVSVHILVVVALQLLFIPNVLSLNQTNAYLHHKCVNDQGTYNSGTPYEKNLNSLIRTISTLNLNFGFVHSSNGDAPNSVFIKLQCRGDSYFSKCRSCLATANSEIRRRCPKNKEKIIWYDNCVLEISSIDTFNKIDYQNNFFMYNAKDVSGDIELFNKNTRDLLHELKEKANIKSKKDFMYAAGEKGLGEKKLYAMVQCTKDLTPNNCNVCLNWIMAKLPKCCKGKQGGRVLSTSCNFRYELYPFLMI.

The signal sequence occupies residues 1–30 (MYSSVSKRLVSVHILVVVALQLLFIPNVLS). Gnk2-homologous domains are found at residues 37–139 (YLHH…SIDT) and 145–253 (YQNN…LYPF).

This sequence belongs to the cysteine-rich repeat secretory protein family.

It is found in the secreted. The sequence is that of Putative cysteine-rich repeat secretory protein 21 (CRRSP21) from Arabidopsis thaliana (Mouse-ear cress).